A 474-amino-acid polypeptide reads, in one-letter code: Serine/threonine-protein kinase ksp1 (474 aa).

In terms of domain architecture, Protein kinase spans 9–280 (YKVERPLNKG…EAVLAVTKWT (272 aa)). ATP-binding positions include 15–23 (LNKGSYGTV) and Lys-43. Asp-137 (proton acceptor) is an active-site residue. A disordered region spans residues 345 to 373 (VDENISTSSSPRSPASLAPVNNSERSYDS). Residues 350 to 363 (STSSSPRSPASLAP) show a composition bias toward low complexity. Phosphoserine occurs at positions 353, 354, 357, 378, 404, and 413.

It belongs to the protein kinase superfamily. Ser/Thr protein kinase family.

Its subcellular location is the cytoplasm. The protein resides in the nucleus. It carries out the reaction L-seryl-[protein] + ATP = O-phospho-L-seryl-[protein] + ADP + H(+). The catalysed reaction is L-threonyl-[protein] + ATP = O-phospho-L-threonyl-[protein] + ADP + H(+). This chain is Serine/threonine-protein kinase ksp1 (ksp1), found in Schizosaccharomyces pombe (strain 972 / ATCC 24843) (Fission yeast).